The sequence spans 389 residues: MTTQHPDTPETGITPGGTSGAFRDVLSKDHARRGKPPLHFVDMTPEQRVEKAAELGLPKFRVKQLANHYFGHFDVNAAEFTDFPAAKRSEAAAAFFPQLITEVTRQVADEGTTIKTLWKLFDGSLIESVLMRYPTRTTLCISSQVGCGMDCPFCATGKLGLTRNMSTGEIIEQVRVAAKMMRDGEVAGGEGRLSNIVFMGMGEPMGNYNSVLSAVRQISAMPPEGFGISARNITVSTVGVVPGIKKLTAEGIPVRLAVSLHAPSDELRDELVPMNKRFNTKQVLDAAHDYWLASKRRVSIEYALMRGINDQAEHAQLLAKRLNHYGDNWAHVNPIPLNPIEGSKWTASKPEDEQRFLEILHRAGITATLRDTRGQDIDGACGQLAAKER.

The segment at 1 to 23 is disordered; it reads MTTQHPDTPETGITPGGTSGAFR. Glu127 functions as the Proton acceptor in the catalytic mechanism. The region spanning 133-376 is the Radical SAM core domain; sequence YPTRTTLCIS…ATLRDTRGQD (244 aa). Cys140 and Cys381 are joined by a disulfide. Residues Cys147, Cys151, and Cys154 each coordinate [4Fe-4S] cluster. S-adenosyl-L-methionine-binding positions include 202–203, Ser236, 259–261, and Asn338; these read GE and SLH. The active-site S-methylcysteine intermediate is the Cys381.

It belongs to the radical SAM superfamily. RlmN family. The cofactor is [4Fe-4S] cluster.

The protein localises to the cytoplasm. It catalyses the reaction adenosine(2503) in 23S rRNA + 2 reduced [2Fe-2S]-[ferredoxin] + 2 S-adenosyl-L-methionine = 2-methyladenosine(2503) in 23S rRNA + 5'-deoxyadenosine + L-methionine + 2 oxidized [2Fe-2S]-[ferredoxin] + S-adenosyl-L-homocysteine. It carries out the reaction adenosine(37) in tRNA + 2 reduced [2Fe-2S]-[ferredoxin] + 2 S-adenosyl-L-methionine = 2-methyladenosine(37) in tRNA + 5'-deoxyadenosine + L-methionine + 2 oxidized [2Fe-2S]-[ferredoxin] + S-adenosyl-L-homocysteine. Its function is as follows. Specifically methylates position 2 of adenine 2503 in 23S rRNA and position 2 of adenine 37 in tRNAs. The polypeptide is Probable dual-specificity RNA methyltransferase RlmN (Bifidobacterium longum (strain NCC 2705)).